A 541-amino-acid polypeptide reads, in one-letter code: Protein yellow (541 aa).

Residues 1 to 21 (MFQDKGWVLLTLITLVSPSWA) form the signal peptide. Residue N144 is glycosylated (N-linked (GlcNAc...) asparagine).

Belongs to the major royal jelly protein family.

It localises to the secreted. Functionally, controls the pigmentation pattern of the adult cuticle and larval mouth parts. In Drosophila yakuba (Fruit fly), this protein is Protein yellow (y).